The sequence spans 341 residues: DnaJ homolog subfamily C member 22 (341 aa).

In terms of domain architecture, TM2 spans 4–50; sequence GLLMTYALWAFGGPVGLHHLYLGRDSHALLWMLTLGGGGLGWLWEFW. Helical transmembrane passes span 5 to 25, 30 to 50, 81 to 101, 105 to 125, 135 to 155, 185 to 205, and 232 to 252; these read LLMT…HLYL, HALL…WEFW, FASQ…SLSS, FYIV…AAVG, LGAA…ILPI, VGLA…YNTA, and VESV…APGF. One can recognise a J domain in the interval 277-341; the sequence is LAHQVLGIPE…QPKKPRASWR (65 aa).

The protein localises to the membrane. Functionally, may function as a co-chaperone. The sequence is that of DnaJ homolog subfamily C member 22 (Dnajc22) from Rattus norvegicus (Rat).